Consider the following 289-residue polypeptide: Bifunctional protein FolD (289 aa).

Residues 165–167 (GAS) and S190 contribute to the NADP(+) site.

The protein belongs to the tetrahydrofolate dehydrogenase/cyclohydrolase family. As to quaternary structure, homodimer.

It catalyses the reaction (6R)-5,10-methylene-5,6,7,8-tetrahydrofolate + NADP(+) = (6R)-5,10-methenyltetrahydrofolate + NADPH. The catalysed reaction is (6R)-5,10-methenyltetrahydrofolate + H2O = (6R)-10-formyltetrahydrofolate + H(+). The protein operates within one-carbon metabolism; tetrahydrofolate interconversion. Its function is as follows. Catalyzes the oxidation of 5,10-methylenetetrahydrofolate to 5,10-methenyltetrahydrofolate and then the hydrolysis of 5,10-methenyltetrahydrofolate to 10-formyltetrahydrofolate. The protein is Bifunctional protein FolD of Ralstonia pickettii (strain 12J).